The following is a 314-amino-acid chain: MFKEEDSLRKGQNVAAWKTLLAGAVSGLLARSITAPMDTIKIRLQLTPANGLKPFGSQVMEVARSMIKNEGIRAFWKGNIPGSLLYVTYGSAQFSSYSLFNRYLTPFGLEARLHSLVVGAFAGITSSIVSYPFDVLRTRLVANNQMHSMSITREVRDIWKLEGLPGFFKGSIASMTTITLTASIMFGTYETIRIYCDENEKTTAAHKKWELATLNHSAGTIGGVIAKIITFPLETIRRRMQFMNSKHLEKFSRHSSVYGSYKGYGFARIGLQILKQEGVSSLYRGILVALSKTIPTTFVSFWGYETAIHYLRMY.

Helical transmembrane passes span 14–30 (VAAW…GLLA), 84–100 (LLYV…YSLF), 116–136 (LVVG…FDVL), 170–186 (GSIA…SIMF), 217–233 (SAGT…TFPL), and 285–302 (GILV…VSFW). Solcar repeat units lie at residues 14–103 (VAAW…FNRY), 110–195 (EARL…IRIY), and 210–310 (ELAT…AIHY).

Belongs to the mitochondrial carrier (TC 2.A.29) family.

The protein localises to the mitochondrion inner membrane. Its function is as follows. Mitochondrial transporter that mediates uptake of thiamine pyrophosphate (ThPP) into mitochondria. This chain is Mitochondrial thiamine pyrophosphate carrier 1 (TPC1), found in Saccharomyces cerevisiae (strain YJM789) (Baker's yeast).